The following is a 146-amino-acid chain: MANYELTYIVRPDLDKDAKAALVTRFDSILSDNGAKIDKSEDWDTRRFAYEINNYRQGTYHIVTFSSEDEKAVNEFDRLAKISGDILRHMIVAVDLEKLADAHAKQAAATQRAAERRAQREAERNAAQAQSSASNQARTAATTSGK.

The tract at residues 106 to 146 is disordered; it reads QAAATQRAAERRAQREAERNAAQAQSSASNQARTAATTSGK. Residues 113–124 show a composition bias toward basic and acidic residues; that stretch reads AAERRAQREAER. Low complexity predominate over residues 125–146; sequence NAAQAQSSASNQARTAATTSGK.

Belongs to the bacterial ribosomal protein bS6 family.

Functionally, binds together with bS18 to 16S ribosomal RNA. In Oenococcus oeni (strain ATCC BAA-331 / PSU-1), this protein is Small ribosomal subunit protein bS6.